Consider the following 344-residue polypeptide: Glycerol-3-phosphate dehydrogenase [NAD(P)+] (344 aa).

Residues serine 18, tyrosine 19, histidine 39, and lysine 113 each contribute to the NADPH site. 3 residues coordinate sn-glycerol 3-phosphate: lysine 113, glycine 142, and threonine 144. Alanine 146 is a binding site for NADPH. The sn-glycerol 3-phosphate site is built by lysine 198, aspartate 251, serine 261, arginine 262, and asparagine 263. Catalysis depends on lysine 198, which acts as the Proton acceptor. Position 262 (arginine 262) interacts with NADPH. Isoleucine 286 and glutamate 288 together coordinate NADPH.

Belongs to the NAD-dependent glycerol-3-phosphate dehydrogenase family.

The protein resides in the cytoplasm. The enzyme catalyses sn-glycerol 3-phosphate + NAD(+) = dihydroxyacetone phosphate + NADH + H(+). It carries out the reaction sn-glycerol 3-phosphate + NADP(+) = dihydroxyacetone phosphate + NADPH + H(+). It participates in membrane lipid metabolism; glycerophospholipid metabolism. Functionally, catalyzes the reduction of the glycolytic intermediate dihydroxyacetone phosphate (DHAP) to sn-glycerol 3-phosphate (G3P), the key precursor for phospholipid synthesis. The protein is Glycerol-3-phosphate dehydrogenase [NAD(P)+] of Blochmanniella pennsylvanica (strain BPEN).